Reading from the N-terminus, the 481-residue chain is Cysteine--tRNA ligase (481 aa).

Zn(2+) is bound at residue cysteine 29. Residues 31–41 (PTVYDYSHLGH) carry the 'HIGH' region motif. The Zn(2+) site is built by cysteine 210, histidine 235, and glutamate 239. Residues 272 to 276 (KMSKS) carry the 'KMSKS' region motif. Lysine 275 lines the ATP pocket.

It belongs to the class-I aminoacyl-tRNA synthetase family. Monomer. The cofactor is Zn(2+).

It is found in the cytoplasm. The catalysed reaction is tRNA(Cys) + L-cysteine + ATP = L-cysteinyl-tRNA(Cys) + AMP + diphosphate. The sequence is that of Cysteine--tRNA ligase from Anaeromyxobacter dehalogenans (strain 2CP-1 / ATCC BAA-258).